A 283-amino-acid polypeptide reads, in one-letter code: Non-selective voltage-gated ion channel VDAC3 (283 aa).

Cys-2 is subject to N-acetylcysteine. Phosphothreonine is present on Thr-4. An N6-acetyllysine mark is found at Lys-12, Lys-15, and Lys-20. The next 2 beta stranded transmembrane spans lie at 26 to 35 (MVKIDLKTKS) and 39 to 47 (VEFSTSGHA). Position 33 is a phosphothreonine (Thr-33). Lys-53 participates in a covalent cross-link: Glycyl lysine isopeptide (Lys-Gly) (interchain with G-Cter in ubiquitin). Beta stranded transmembrane passes span 54–64 (ASGNLETKYKV), 69–76 (LIFTQKWN), and 80–89 (TLGTEISWEN). The residue at position 90 (Lys-90) is an N6-acetyllysine. The beta stranded transmembrane segment at 95 to 104 (LKLTVDTIFV) threads the bilayer. Glycyl lysine isopeptide (Lys-Gly) (interchain with G-Cter in ubiquitin) cross-links involve residues Lys-109 and Lys-110. The next 10 membrane-spanning stretches (beta stranded) occupy residues 111 to 120 (SGKLKASYRR), 123 to 130 (FSVGSKVD), 137 to 145 (TIYGWAVLA), 150 to 158 (LAGYQMSFD), 163 to 175 (KLCQ…GYKA), 178 to 185 (FQLHTHVN), 189 to 198 (EFGGSIYQRV), 202 to 211 (IETSINLAWT), 218 to 227 (RFGIAAKYRL), and 231 to 238 (TSLSAKVN). The residue at position 241 (Ser-241) is a Phosphoserine. Residues 242–244 (LIG) and 260–264 (SALVD) each bind NAD(+). The next 2 membrane-spanning stretches (beta stranded) occupy residues 242 to 251 (LIGLGYTQSL) and 254 to 263 (GVKLTLSALV). Lys-266 is subject to N6-acetyllysine; alternate. Residue Lys-266 forms a Glycyl lysine isopeptide (Lys-Gly) (interchain with G-Cter in ubiquitin); alternate linkage. Residues 273 to 282 (HKVGLGFELE) form a beta stranded membrane-spanning segment.

Belongs to the eukaryotic mitochondrial porin family. Interacts with ARMC12 in a TBC1D21-dependent manner. Interacts with MISFA. In terms of processing, ubiquitinated by PRKN during mitophagy, leading to its degradation and enhancement of mitophagy. Deubiquitinated by USP30. As to expression, isoform 1 is widely expressed with strong expression in atrium and ascitic tumor, lower levels in brain and very low levels in liver and kidney. Isoform 2 is also widely expressed with highest levels in brain but no expression in kidney. Also expressed in flagella of epididymal sperm.

The protein localises to the mitochondrion outer membrane. It localises to the membrane. The catalysed reaction is chloride(in) = chloride(out). The enzyme catalyses K(+)(in) = K(+)(out). Non-selective voltage-gated ion channel that mediates the transport of anions and cations through the mitochondrion outer membrane and plasma membrane. Forms a high-conducting channel with a stable open state and a voltage-induced closure with a mild preference for anions over cations. Involved in male fertility and sperm mitochondrial sheath formation. This chain is Non-selective voltage-gated ion channel VDAC3, found in Rattus norvegicus (Rat).